The following is a 306-amino-acid chain: tRNA dimethylallyltransferase 2 (306 aa).

11–18 serves as a coordination point for ATP; sequence GPTASGKT. 13-18 is a binding site for substrate; that stretch reads TASGKT. An interaction with substrate tRNA region spans residues 36–39; that stretch reads DSRQ.

It belongs to the IPP transferase family. As to quaternary structure, monomer. The cofactor is Mg(2+).

The catalysed reaction is adenosine(37) in tRNA + dimethylallyl diphosphate = N(6)-dimethylallyladenosine(37) in tRNA + diphosphate. Its function is as follows. Catalyzes the transfer of a dimethylallyl group onto the adenine at position 37 in tRNAs that read codons beginning with uridine, leading to the formation of N6-(dimethylallyl)adenosine (i(6)A). The protein is tRNA dimethylallyltransferase 2 of Bacteroides fragilis (strain ATCC 25285 / DSM 2151 / CCUG 4856 / JCM 11019 / LMG 10263 / NCTC 9343 / Onslow / VPI 2553 / EN-2).